A 556-amino-acid polypeptide reads, in one-letter code: Putative D-arabinono-1,4-lactone oxidase (556 aa).

The 171-residue stretch at phenylalanine 47–alanine 217 folds into the FAD-binding PCMH-type domain. Position 84 is a pros-8alpha-FAD histidine (histidine 84).

The protein belongs to the oxygen-dependent FAD-linked oxidoreductase family. Requires FAD as cofactor.

Its subcellular location is the mitochondrion membrane. The enzyme catalyses D-arabinono-1,4-lactone + O2 = dehydro-D-arabinono-1,4-lactone + H2O2 + H(+). The protein operates within cofactor biosynthesis; D-erythroascorbate biosynthesis; dehydro-D-arabinono-1,4-lactone from D-arabinose: step 2/2. This is Putative D-arabinono-1,4-lactone oxidase (alo-1) from Neurospora crassa (strain ATCC 24698 / 74-OR23-1A / CBS 708.71 / DSM 1257 / FGSC 987).